Consider the following 469-residue polypeptide: ATP synthase subunit beta (469 aa).

155-162 (GGAGVGKT) provides a ligand contact to ATP.

Belongs to the ATPase alpha/beta chains family. F-type ATPases have 2 components, CF(1) - the catalytic core - and CF(0) - the membrane proton channel. CF(1) has five subunits: alpha(3), beta(3), gamma(1), delta(1), epsilon(1). CF(0) has three main subunits: a(1), b(2) and c(9-12). The alpha and beta chains form an alternating ring which encloses part of the gamma chain. CF(1) is attached to CF(0) by a central stalk formed by the gamma and epsilon chains, while a peripheral stalk is formed by the delta and b chains.

It is found in the cell inner membrane. It carries out the reaction ATP + H2O + 4 H(+)(in) = ADP + phosphate + 5 H(+)(out). Produces ATP from ADP in the presence of a proton gradient across the membrane. The catalytic sites are hosted primarily by the beta subunits. The polypeptide is ATP synthase subunit beta (Helicobacter pylori (strain P12)).